The following is a 363-amino-acid chain: MSGNTYGKLFTVTTAGESHGPALVAIVDGCPPGLEISLADLQHDLDRRKPGTSRHTTQRQEPDEVEILSGVFEGRTTGCSIGLLIRNTDQKSKDYSAIKDLFRPAHADYTYHHKYGLRDYRGGGRSSARETAMRVAAGAIAKKFLATQGIRVRGYMSQLGPIEIPFKTWDSVEQNAFFSPDPDKVPELEAYMDQLRRDQDSVGAKITVVAEGVMPGLGEPIFDRLDAELAHALMSINAVKGVEIGAGFASVAQRGTEHRDELTPEGFLSNNAGGILGGISSGQPIVAHLALKPTSSITTPGRSIDVDGNPVEVITKGRHDPCVGIRATPIAEAMMAIVLMDHLLRHRAQNAEVKVGTPVLGQL.

NADP(+) contacts are provided by Arg48 and Arg54. Residues 125-127 (RSS), 237-238 (NA), Gly277, 292-296 (KPTSS), and Arg318 each bind FMN.

Belongs to the chorismate synthase family. In terms of assembly, homotetramer. It depends on FMNH2 as a cofactor.

The enzyme catalyses 5-O-(1-carboxyvinyl)-3-phosphoshikimate = chorismate + phosphate. Its pathway is metabolic intermediate biosynthesis; chorismate biosynthesis; chorismate from D-erythrose 4-phosphate and phosphoenolpyruvate: step 7/7. In terms of biological role, catalyzes the anti-1,4-elimination of the C-3 phosphate and the C-6 proR hydrogen from 5-enolpyruvylshikimate-3-phosphate (EPSP) to yield chorismate, which is the branch point compound that serves as the starting substrate for the three terminal pathways of aromatic amino acid biosynthesis. This reaction introduces a second double bond into the aromatic ring system. This chain is Chorismate synthase, found in Pseudomonas entomophila (strain L48).